The primary structure comprises 748 residues: MASELPMFGQGAGVDRAACLPGAERCAGLRGLDLSMDALKQAQAPLRSAPTRPFLPQESPLSMLPCRLDRAADVRRSPVLAGATLIVRRLFIFVGTALLTLAGGYGMYDVVKVGGVTFLEALLLGLFLVLLAWVAFSFMSALAGFFVLLTRRQPNLPIDTTGPLPHVTSRTAMLLPTYNEDPHHVMARLRAMYESIDATGYGEQFDWFLLSDTTDPDIWISEEMAFIELRRACGGDQLYYRHRSDNTARKSGNIADWVTRFGAAYDHMIVLDADSLMEGDTIVRLVHAMERTPSCALIQTQPVIVNARTLFSRLQQFAGRVYGPLITAGNAWWHDGDGNYWGHNAIIRLKAFAAEAGLPELRGRKPFGGHILSHDFVEAALMRRAGWAIYMVPAVRGSFEEVPPSLLDFAGRDRRWCQGNLQHLAVLPTRGLHWVSRLHLLTGIGSYVTAPLWLLFLLVGLLISLQAHFIRPEYFPKGFSLFPTWPQQDPVLAAWVFAATMGLLILPKLLAYLVLISNREERTGFAGSGRVLAGVVCEAFVAALLAPCMMILQTKAVMEILAGRDAGWQVQRRGDGQLARGEVYRKLAGPTLCGLVLSVCAYSVSLPLLLWMSPVVLGLLLSIPLGIMTSLQLSAPGVFATPEINEPPAVVLRANELAAAEPTEMAGALRQLSRDPELLAEHLGSQSPASSRRFGPVDVPLATATAKVARCESLDDVLAWFDKLEMRAVLENPTLLRRILELPAGGRD.

7 consecutive transmembrane segments (helical) span residues 85–107 (LIVRRLFIFVGTALLTLAGGYGM), 127–149 (FLVLLAWVAFSFMSALAGFFVLL), 443–465 (GIGSYVTAPLWLLFLLVGLLISL), 494–516 (AWVFAATMGLLILPKLLAYLVLI), 529–551 (GRVLAGVVCEAFVAALLAPCMMI), 587–606 (LAGPTLCGLVLSVCAYSVSL), and 608–630 (LLLWMSPVVLGLLLSIPLGIMTS).

It belongs to the glycosyltransferase 2 family. OpgH subfamily.

It localises to the cell inner membrane. It functions in the pathway glycan metabolism; osmoregulated periplasmic glucan (OPG) biosynthesis. Its function is as follows. Involved in the biosynthesis of osmoregulated periplasmic glucans (OPGs). The protein is Glucans biosynthesis glucosyltransferase H of Bradyrhizobium diazoefficiens (strain JCM 10833 / BCRC 13528 / IAM 13628 / NBRC 14792 / USDA 110).